Reading from the N-terminus, the 182-residue chain is Large ribosomal subunit protein uL5 (182 aa).

It belongs to the universal ribosomal protein uL5 family. As to quaternary structure, part of the 50S ribosomal subunit; part of the 5S rRNA/L5/L18/L25 subcomplex. Contacts the 5S rRNA and the P site tRNA. Forms a bridge to the 30S subunit in the 70S ribosome.

Functionally, this is one of the proteins that bind and probably mediate the attachment of the 5S RNA into the large ribosomal subunit, where it forms part of the central protuberance. In the 70S ribosome it contacts protein S13 of the 30S subunit (bridge B1b), connecting the 2 subunits; this bridge is implicated in subunit movement. Contacts the P site tRNA; the 5S rRNA and some of its associated proteins might help stabilize positioning of ribosome-bound tRNAs. The protein is Large ribosomal subunit protein uL5 of Thermus aquaticus.